The primary structure comprises 763 residues: Phosphoglycerol transferase I (763 aa).

Transmembrane regions (helical) follow at residues 1–21, 26–46, 77–97, and 108–128; these read MSEL…AWKA, WWFA…ITLY, ILPG…LGWV, and VGYS…SPAF.

It belongs to the OpgB family.

Its subcellular location is the cell inner membrane. The enzyme catalyses a phosphatidylglycerol + a membrane-derived-oligosaccharide D-glucose = a 1,2-diacyl-sn-glycerol + a membrane-derived-oligosaccharide 6-(glycerophospho)-D-glucose.. Its pathway is glycan metabolism; osmoregulated periplasmic glucan (OPG) biosynthesis. Transfers a phosphoglycerol residue from phosphatidylglycerol to the membrane-bound nascent glucan backbones. The chain is Phosphoglycerol transferase I from Salmonella heidelberg (strain SL476).